A 300-amino-acid polypeptide reads, in one-letter code: Protein phosphatase 2C 1 (300 aa).

In terms of domain architecture, PPM-type phosphatase spans 23-298; the sequence is IFAASEMQGW…DNMTTILVYL (276 aa). Residues aspartate 57, glycine 58, aspartate 237, and aspartate 289 each coordinate Mn(2+).

It belongs to the PP2C family. Mg(2+) serves as cofactor. The cofactor is Mn(2+). In terms of processing, the N-terminus is blocked.

Its subcellular location is the membrane. The enzyme catalyses O-phospho-L-seryl-[protein] + H2O = L-seryl-[protein] + phosphate. It carries out the reaction O-phospho-L-threonyl-[protein] + H2O = L-threonyl-[protein] + phosphate. Its function is as follows. Serine and threonine phosphatase. In Paramecium tetraurelia, this protein is Protein phosphatase 2C 1.